A 227-amino-acid chain; its full sequence is PKHD-type hydroxylase BPSS1206 (227 aa).

The Fe2OG dioxygenase domain maps to 78–178 (KVFPPLFNRY…RVASFFWIQS (101 aa)). Fe cation contacts are provided by histidine 96, aspartate 98, and histidine 159. Arginine 169 is a binding site for 2-oxoglutarate.

Fe(2+) is required as a cofactor. L-ascorbate serves as cofactor.

The polypeptide is PKHD-type hydroxylase BPSS1206 (Burkholderia pseudomallei (strain K96243)).